The following is a 147-amino-acid chain: Immunity protein YxxD (147 aa).

In terms of assembly, probably interacts with cognate toxin YxiD but not with other non-cognate toxins. The interaction inhibits the toxic activity of YxiD.

It is found in the cytoplasm. In terms of biological role, immunity component of one of 6 LXG toxin-immunity modules in this strain. They promote kin selection, mediate competition in biofilms, and drive spatial segregation of different strains, indicating that LXG toxins may help avoid warfare between strains in biofilms. Mediates intercellular competition during biofilm formation; disruption of the operon disadvantages the bacteria, but overexpression of the cognate immunity protein restores growth in competition with wild-type. In situ neutralizes the toxic effect of cognate toxin YxiD. Neutralizes the toxic activity of cognate toxin YxiD upon expression in E.coli. Does not have immunity protein activity on other LXG toxins. This chain is Immunity protein YxxD (yxxD), found in Bacillus subtilis (strain 168).